Reading from the N-terminus, the 1083-residue chain is Voltage-gated inwardly rectifying potassium channel KCNH3 (1083 aa).

Over 1-228 (MPAMRGLLAP…HCGALRATWD (228 aa)) the chain is Cytoplasmic. Positions 18–90 (IATRFDGTHS…QQIRKALDEH (73 aa)) constitute a PAS domain. One can recognise a PAC domain in the interval 93 to 145 (FKAELILYRKSGLPFWCLLDVIPIKNEKGEVALFLVSHKDISETKNRGGPDRW). The segment covering 137–150 (KNRGGPDRWKETGG) has biased composition (basic and acidic residues). The disordered stretch occupies residues 137–157 (KNRGGPDRWKETGGGRRRYGR). Residues 229-249 (GFILLATLYVAVTVPYSVCVS) traverse the membrane as a helical segment. Over 250-259 (TAREPSAARG) the chain is Extracellular. A helical membrane pass occupies residues 260 to 280 (PPSVCDLAVEVLFILDIVLNF). Residues 281 to 302 (RTTFVSKSGQVVFAPKSICLHY) are Cytoplasmic-facing. The chain crosses the membrane as a helical span at residues 303-323 (VTTWFLLDVIAALPFDLLHAF). Residues 324 to 331 (KVNVYFGA) are Extracellular-facing. A helical; Voltage-sensor transmembrane segment spans residues 332–352 (HLLKTVRLLRLLRLLPRLDRY). Residues 353–361 (SQYSAVVLT) are Cytoplasmic-facing. The helical transmembrane segment at 362-382 (LLMAVFALLAHWVACVWFYIG) threads the bilayer. At 383–453 (QREIESSESE…GGPSLRSAYI (71 aa)) the chain is on the extracellular side. Residues N421, N428, and N436 are each glycosylated (N-linked (GlcNAc...) asparagine). The pore-forming intramembrane region spans 454 to 474 (TSLYFALSSLTSVGFGNVSAN). The Selectivity filter signature appears at 465–470 (SVGFGN). At 475–479 (TDTEK) the chain is on the extracellular side. Residues 480 to 500 (IFSICTMLIGALMHAVVFGNV) traverse the membrane as a helical segment. At 501–1083 (TAIIQRMYAR…QWTQEEGTGV (583 aa)) the chain is on the cytoplasmic side. 582-697 (LFEAASRGCL…FAPRFSRGLR (116 aa)) provides a ligand contact to a nucleoside 3',5'-cyclic phosphate. Disordered stretches follow at residues 729–810 (EEKE…LRLP), 832–873 (CGSD…SEAR), and 972–1055 (MAPW…ALPW). A compositionally biased stretch (basic residues) spans 773–785 (TAPRPRLGGRGRP). Residues 844–861 (GQSGPECSSSPSPGPESG) are compositionally biased toward low complexity.

It belongs to the potassium channel family. H (Eag) (TC 1.A.1.20) subfamily. Kv12.2/KCNH3 sub-subfamily. The potassium channel is probably composed of a homo- or heterotetrameric complex of pore-forming alpha subunits that can associate with modulating beta subunits. Interacts with KCNE1 and KCNE3; these interactions regulate KCNH3 trafficking to the plasma membrane and its subsequent voltage-gated potassium channel activity. In terms of processing, N-glycosylated. N-glycosylation mediates traffick to the cell membrane but is not necessary for voltage-gated potassium channel activity. In terms of tissue distribution, detected only in brain, in particular in the telencephalon. Detected in the cerebral cortex, occipital pole, frontal and temporal lobe, putamen, amygdala, hippocampus and caudate nucleus.

Its subcellular location is the cell membrane. It carries out the reaction K(+)(in) = K(+)(out). Pore-forming (alpha) subunit of a voltage-gated inwardly rectifying potassium channel. Charactherized by a fast rate of activation during depolarization followed by a rapid inactivation at much more depolarized value causing inward rectification due to a C-type inactivation mechanism. Exhibits a rapid recovery from inactivation. The protein is Voltage-gated inwardly rectifying potassium channel KCNH3 of Homo sapiens (Human).